We begin with the raw amino-acid sequence, 672 residues long: Spermatid perinuclear RNA-binding protein (672 aa).

A DZF domain is found at 5–363 (RSFANDDRHV…ALKRPFEDGL (359 aa)). The segment at 349–371 (GAGSSALKRPFEDGLGDDKDPNK) is disordered. The segment covering 357 to 371 (RPFEDGLGDDKDPNK) has biased composition (basic and acidic residues). The 67-residue stretch at 387-453 (DLMNALMRLN…AVKVLQAMGY (67 aa)) folds into the DRBM 1 domain. Residues 467–476 (DEKSDNESKN) show a composition bias toward basic and acidic residues. The disordered stretch occupies residues 467 to 514 (DEKSDNESKNDTVSSNSSNNTGNSTTETSSTLEVRTQGPILTASGKNP). The segment covering 477–497 (DTVSSNSSNNTGNSTTETSST) has biased composition (low complexity). The region spanning 510 to 576 (SGKNPVMELN…ALAALEKLFS (67 aa)) is the DRBM 2 domain. Asymmetric dimethylarginine occurs at positions 612 and 617.

As to quaternary structure, interacts with EIF2AK2. Associates with microtubules; it is unsure whether such interaction is direct or indirect. As to expression, isoform 2 is expressed in spermatocytes (at protein level). Expressed in testis, thymus, ovary, liver, kidney, heart, spleen and brain. Expressed in cortex, dentate gyrus and Purkinje cell layer and granule cells of the cerebellum.

It is found in the cytoplasm. The protein localises to the cytoskeleton. In terms of biological role, involved in spermatogenesis and sperm function. Plays a role in regulation of cell growth. Binds to double-stranded DNA and RNA. Binds most efficiently to poly(I:C) RNA than to poly(dI:dC) DNA. Also binds to single-stranded poly(G) RNA. Binds non-specifically to the mRNA PRM1 3'-UTR and adenovirus VA RNA. The sequence is that of Spermatid perinuclear RNA-binding protein (Strbp) from Mus musculus (Mouse).